We begin with the raw amino-acid sequence, 628 residues long: Beta-lactamase-like protein 1 (628 aa).

Positions 1 to 28 (MKNILSFSFSFSFLYILFLLLFLNNNLL) are cleaved as a signal peptide. N-linked (GlcNAc...) asparagine glycans are attached at residues N45, N68, N198, and N241. Residues 245 to 281 (NNNNNNNNNNNNNNNNNNNNNNNNNNNNNNNNNNNNN) show a composition bias toward low complexity. Positions 245 to 285 (NNNNNNNNNNNNNNNNNNNNNNNNNNNNNNNNNNNNNKIKT) are disordered. N313 and N335 each carry an N-linked (GlcNAc...) asparagine glycan. Positions 494–516 (EKEEKEEEEENQQDESQQQQQQQ) are disordered. Residues 496–506 (EEKEEEEENQQ) show a composition bias toward acidic residues. Over residues 507-516 (DESQQQQQQQ) the composition is skewed to low complexity.

Belongs to the beta-lactamase family.

It localises to the secreted. This is Beta-lactamase-like protein 1 from Dictyostelium discoideum (Social amoeba).